A 456-amino-acid chain; its full sequence is Zinc finger protein 25 (456 aa).

The KRAB domain maps to 8 to 79 (VTLKDVIVEF…EVEFPHRGFP (72 aa)). 12 C2H2-type zinc fingers span residues 118 to 140 (CECK…QHTH), 146 to 168 (YDCD…QKIH), 174 to 196 (YECK…LRTH), 202 to 224 (YECN…QKTH), 230 to 252 (FECT…QKTH), 258 to 280 (YECK…QRMH), 286 to 308 (YKCK…QRSH), 314 to 336 (YECK…QRTH), 342 to 364 (FECN…QRKH), 370 to 392 (YECT…QRTH), 398 to 420 (YACK…QRKH), and 426 to 448 (YECQ…QKTH).

This sequence belongs to the krueppel C2H2-type zinc-finger protein family.

The protein resides in the nucleus. May be involved in transcriptional regulation. The protein is Zinc finger protein 25 (ZNF25) of Homo sapiens (Human).